Reading from the N-terminus, the 210-residue chain is Large ribosomal subunit protein uL3 (210 aa).

The protein belongs to the universal ribosomal protein uL3 family. Part of the 50S ribosomal subunit. Forms a cluster with proteins L14 and L19.

In terms of biological role, one of the primary rRNA binding proteins, it binds directly near the 3'-end of the 23S rRNA, where it nucleates assembly of the 50S subunit. The polypeptide is Large ribosomal subunit protein uL3 (Geobacter metallireducens (strain ATCC 53774 / DSM 7210 / GS-15)).